Consider the following 304-residue polypeptide: MQNFGKVAVLMGGFSSEREISLDSGTAILNALKSKGIDAYAFDPKETPLSELKAQGFQTAFNILHGTYGEDGAVQGALELLGIPYTGSGVAASAIGMDKYRCKLIWQALGLPVPEFAVLHDDTDFDAVEEKLGLPMFVKPAAEGSSVGVVKVKGKGRLKSVYEELKHLQGEIIAERFIGGGEYSCPVLNGKGLPGIHIIPATEFYDYEAKYNRNDTIYQCPSEDLTEAEESLMRELAVRGAQAIGAESCVRVDFLKDTDGKLYLLEINTLPGMTSHSLVPKSAAVTGVGFADLCIEILKTAHVG.

The ATP-grasp domain maps to 103–299; that stretch reads KLIWQALGLP…FADLCIEILK (197 aa). Residue 129–184 coordinates ATP; that stretch reads EEKLGLPMFVKPAAEGSSVGVVKVKGKGRLKSVYEELKHLQGEIIAERFIGGGEYS. The Mg(2+) site is built by Asp253, Glu266, and Asn268.

Belongs to the D-alanine--D-alanine ligase family. The cofactor is Mg(2+). Mn(2+) serves as cofactor.

The protein localises to the cytoplasm. The catalysed reaction is 2 D-alanine + ATP = D-alanyl-D-alanine + ADP + phosphate + H(+). It participates in cell wall biogenesis; peptidoglycan biosynthesis. Its function is as follows. Cell wall formation. The chain is D-alanine--D-alanine ligase from Neisseria meningitidis serogroup C / serotype 2a (strain ATCC 700532 / DSM 15464 / FAM18).